We begin with the raw amino-acid sequence, 670 residues long: UvrABC system protein B (670 aa).

The Helicase ATP-binding domain occupies 26–183 (NGLKSGLAFQ…QRLVDLQYNR (158 aa)). 39-46 (GVTGSGKT) lines the ATP pocket. Residues 92 to 115 (YYDYYQPEAYVPSSDSFIEKDAAI) carry the Beta-hairpin motif. Residues 431–597 (QVDDLLSEIN…GLSKQVNDVM (167 aa)) form the Helicase C-terminal domain. One can recognise a UVR domain in the interval 630–665 (LKQIALSEKQMFACAKNLEFEKAALFRDEVTKLHEQ).

This sequence belongs to the UvrB family. Forms a heterotetramer with UvrA during the search for lesions. Interacts with UvrC in an incision complex.

The protein localises to the cytoplasm. Its function is as follows. The UvrABC repair system catalyzes the recognition and processing of DNA lesions. A damage recognition complex composed of 2 UvrA and 2 UvrB subunits scans DNA for abnormalities. Upon binding of the UvrA(2)B(2) complex to a putative damaged site, the DNA wraps around one UvrB monomer. DNA wrap is dependent on ATP binding by UvrB and probably causes local melting of the DNA helix, facilitating insertion of UvrB beta-hairpin between the DNA strands. Then UvrB probes one DNA strand for the presence of a lesion. If a lesion is found the UvrA subunits dissociate and the UvrB-DNA preincision complex is formed. This complex is subsequently bound by UvrC and the second UvrB is released. If no lesion is found, the DNA wraps around the other UvrB subunit that will check the other stand for damage. The sequence is that of UvrABC system protein B from Psychromonas ingrahamii (strain DSM 17664 / CCUG 51855 / 37).